Reading from the N-terminus, the 557-residue chain is Small ribosomal subunit protein bS1 (557 aa).

4 S1 motif domains span residues 21–87 (GSIV…LSRE), 105–171 (AETV…VSRR), 192–260 (GMEV…LGLK), and 277–347 (GTKL…LGLK). Residues K229, K279, and K363 each carry the N6-acetyllysine modification. S1 motif domains follow at residues 364–434 (GDRV…LGVK) and 451–520 (GAIV…LSVR).

This sequence belongs to the bacterial ribosomal protein bS1 family. In terms of assembly, part of the 30S ribosomal subunit. Some nascent polypeptide chains are able to cross-link to this protein in situ. Can be cross-linked to mRNA in the ribosome. In terms of processing, phosphorylated; probably on a serine.

In terms of biological role, required for translation of most natural mRNAs except for leaderless mRNA. Binds mRNA upstream of the Shine-Dalgarno (SD) sequence and helps it bind to the 30S ribosomal subunit; acts as an RNA chaperone to unfold structured mRNA on the ribosome but is not essential for mRNAs with strong SDs and little 5'-UTR structure, thus it may help fine-tune which mRNAs that are translated. Unwinds dsRNA by binding to transiently formed ssRNA regions; binds about 10 nucleotides. Has a preference for polypyrimidine tracts. Negatively autoregulates its own translation. This Escherichia coli O157:H7 protein is Small ribosomal subunit protein bS1 (rpsA).